The following is a 93-amino-acid chain: Protein LSO1 (93 aa).

Residues 1–73 (MHNTGKRYSE…TEKLRAKKER (73 aa)) form a disordered region. A coiled-coil region spans residues 20–83 (ARKRRQAYEK…DQLLAAEEEA (64 aa)). 2 stretches are compositionally biased toward basic and acidic residues: residues 25–49 (QAYE…EEGA) and 57–73 (LIME…KKER).

It is found in the nucleus. Its subcellular location is the cytoplasm. In terms of biological role, likely to play a role in iron homeostasis. This chain is Protein LSO1, found in Saccharomyces cerevisiae (strain ATCC 204508 / S288c) (Baker's yeast).